Here is a 254-residue protein sequence, read N- to C-terminus: Metalloprotease YcaL (254 aa).

The signal sequence occupies residues 1 to 19; it reads MKNTKLLLAIATSAALLTG. Cys-20 carries the N-palmitoyl cysteine lipid modification. Cys-20 is lipidated: S-diacylglycerol cysteine. Residue His-134 participates in Zn(2+) binding. Residue Glu-135 is part of the active site. Zn(2+) contacts are provided by His-138 and Glu-193. The segment at 227–254 is disordered; it reads GRTQSMFDSHPPSTERAQHIRDRIASGK. Basic and acidic residues predominate over residues 242–254; sequence RAQHIRDRIASGK.

Belongs to the peptidase M48B family. Zn(2+) serves as cofactor.

The protein resides in the cell inner membrane. In terms of biological role, involved in the degradation of the LPS-assembly protein LptD. Degrades LptD that have engaged the Bam complex but are stalled at an early step in the outer membrane protein assembly process. The polypeptide is Metalloprotease YcaL (ycaL) (Escherichia coli (strain K12)).